Reading from the N-terminus, the 474-residue chain is Receptor-transporting protein 3 (474 aa).

Residues M1–M453 are Cytoplasmic-facing. The segment at T53–G164 adopts a 3CxxC-type zinc-finger fold. Residues S175 to T304 form a disordered region. Composition is skewed to polar residues over residues V197–K228 and V259–T304. A helical transmembrane segment spans residues S454–L474.

It belongs to the TMEM7 family. As to quaternary structure, interacts with TAS2R16. In terms of tissue distribution, expressed predominantly in the liver. Not detected in the olfactory epithelium.

The protein resides in the membrane. Its function is as follows. Promotes functional cell surface expression of the bitter taste receptors TAS2R16 and TAS2R43. In Mus musculus (Mouse), this protein is Receptor-transporting protein 3 (Rtp3).